A 384-amino-acid chain; its full sequence is Glucans biosynthesis protein C (384 aa).

10 helical membrane passes run 17–37 (AWLM…THSW), 54–74 (FIHA…SYML), 91–111 (VGIP…ILLQ), 140–160 (LWFL…FTWF), 173–193 (AISL…YAAI), 212–232 (FIVM…LAFI), 240–260 (FTTP…AYLL), 274–294 (TESV…FSLG), 311–331 (ASLF…AYIT), and 338–358 (LIGF…LYEI).

Belongs to the acyltransferase 3 family. OpgC subfamily.

Its subcellular location is the cell membrane. It functions in the pathway glycan metabolism; osmoregulated periplasmic glucan (OPG) biosynthesis. Functionally, necessary for the succinyl substitution of periplasmic glucans. Could catalyze the transfer of succinyl residues from the cytoplasmic side of the membrane to the nascent glucan backbones on the periplasmic side of the membrane. The protein is Glucans biosynthesis protein C of Salmonella choleraesuis (strain SC-B67).